Reading from the N-terminus, the 159-residue chain is MGATQSFQSVGDLTPAEKDLIRSTWDQLMTHRTGFVADVFIRIFHNDPTAQRKFPQMAGLSPAELRTSRQMHAHAIRVSALMTTYIDEMDTEVLPELLATLTRTHDKNHVGKKNYDLFGKVLMEAIKAELGVGFTKQVHDAWAKTFAIVQGVLITKHAS.

At G2 the chain carries N-acetylglycine. The region spanning 12 to 158 is the Globin domain; sequence DLTPAEKDLI…VQGVLITKHA (147 aa). Heme b-binding residues include H74 and H105.

Belongs to the globin family. Homodimer.

The polypeptide is Globin D, coelomic (Molpadia arenicola (Sea cucumber)).